The sequence spans 498 residues: Guanosine-5'-triphosphate,3'-diphosphate pyrophosphatase (498 aa).

Belongs to the GppA/Ppx family. GppA subfamily.

The catalysed reaction is guanosine 3'-diphosphate 5'-triphosphate + H2O = guanosine 3',5'-bis(diphosphate) + phosphate + H(+). It participates in purine metabolism; ppGpp biosynthesis; ppGpp from GTP: step 2/2. In terms of biological role, catalyzes the conversion of pppGpp to ppGpp. Guanosine pentaphosphate (pppGpp) is a cytoplasmic signaling molecule which together with ppGpp controls the 'stringent response', an adaptive process that allows bacteria to respond to amino acid starvation, resulting in the coordinated regulation of numerous cellular activities. This is Guanosine-5'-triphosphate,3'-diphosphate pyrophosphatase from Pectobacterium atrosepticum (strain SCRI 1043 / ATCC BAA-672) (Erwinia carotovora subsp. atroseptica).